The sequence spans 141 residues: Putative pre-16S rRNA nuclease (141 aa).

It belongs to the YqgF nuclease family.

The protein localises to the cytoplasm. Could be a nuclease involved in processing of the 5'-end of pre-16S rRNA. The chain is Putative pre-16S rRNA nuclease from Sodalis glossinidius (strain morsitans).